A 389-amino-acid chain; its full sequence is MKHYSATLALLPLTLALFLPQAAHAHGSMETPPSRVYGCFLEGPENPKSAACKAAVAAGGTQALYDWNGVNQGNANGNHQAVVPDGQLCGAGKALFKGLNLARSDWPSTAIAPDASGNFQFVYKASAPHATRYFDFYITKDGYNPEKPLAWSDLEPAPFCSITSVKLENGTYRMNCPLPQGKTGKHVIYNVWQRSDSPEAFYACIDVSFSGAVANPWQALGNLRAQQDLPAGATVTLRLFDAQGRDAQRHSLTLAQGANGAKQWPLALAQKVNQDSTLVNIGVLDAYGAVSPVASSQDNQVYVRQAGYRFQVDIELPVEGGGEQPGGDGKVDFDYPQGLQQYDAGTVVRGADGKRYQCKPYPNSGWCKGWDLYYAPGKGMAWQDAWTLL.

The N-terminal stretch at 1-25 (MKHYSATLALLPLTLALFLPQAAHA) is a signal peptide. The Chitin-binding type-4 domain occupies 26 to 208 (HGSMETPPSR…EAFYACIDVS (183 aa)).

In terms of processing, can be detected in the extracellular supernatant as a 43 kDa protein and a 23 kDa protein, both proteins have the same N-terminus. Only the larger protein binds chitin, which may protect it from further processing and/or degradation by elastase (lasB). It is not clear whether the short form is functional or a degradation product.

The protein localises to the secreted. In terms of biological role, binds chitin but does not hydrolyze it, has no detectable protease or staphylolytic activity. The polypeptide is Chitin-binding protein CbpD (Pseudomonas aeruginosa (strain ATCC 15692 / DSM 22644 / CIP 104116 / JCM 14847 / LMG 12228 / 1C / PRS 101 / PAO1)).